The sequence spans 68 residues: Tabimmunregulin 1 (68 aa).

Positions 1–26 (MLLKSYVFFLLSLLIVGLFTSRDADA) are cleaved as a signal peptide. A propeptide spanning residues 27 to 38 (QYEDLVTGYLRK) is cleaved from the precursor.

As to expression, expressed in salivary glands.

Its subcellular location is the secreted. Its function is as follows. Horsefly salivary gland immunosuppressant protein that likely inhibits the host inflammatory response by regulation of anti- and pro-inflammatory cytokines. When tested on mouse splenocytes in the presence of LPS, it increases the secretion of the proinflammatory cytokine interleukin-10 (IL10) and decreases the secretion of the proinflammatory cytokine interferon-gamma (IFNG) in a dose-dependent manner. The polypeptide is Tabimmunregulin 1 (Tabanus yao (Horsefly)).